The primary structure comprises 63 residues: Sec-independent protein translocase protein TatA (63 aa).

Residues 1–21 (MGSFSMWHWLIVLVIVLLLFG) form a helical membrane-spanning segment. The interval 42 to 63 (GMTDEDAPDTAKTVDHKADETK) is disordered. Residues 53–63 (KTVDHKADETK) show a composition bias toward basic and acidic residues.

Belongs to the TatA/E family. In terms of assembly, the Tat system comprises two distinct complexes: a TatABC complex, containing multiple copies of TatA, TatB and TatC subunits, and a separate TatA complex, containing only TatA subunits. Substrates initially bind to the TatABC complex, which probably triggers association of the separate TatA complex to form the active translocon.

It is found in the cell inner membrane. Part of the twin-arginine translocation (Tat) system that transports large folded proteins containing a characteristic twin-arginine motif in their signal peptide across membranes. TatA could form the protein-conducting channel of the Tat system. This chain is Sec-independent protein translocase protein TatA, found in Rhizobium leguminosarum bv. trifolii (strain WSM2304).